The chain runs to 188 residues: Threonylcarbamoyl-AMP synthase (188 aa).

One can recognise a YrdC-like domain in the interval 3–188; sequence QLHPSDIKDV…RSGKILRNGQ (186 aa).

This sequence belongs to the SUA5 family. TsaC subfamily.

It localises to the cytoplasm. It carries out the reaction L-threonine + hydrogencarbonate + ATP = L-threonylcarbamoyladenylate + diphosphate + H2O. Its function is as follows. Required for the formation of a threonylcarbamoyl group on adenosine at position 37 (t(6)A37) in tRNAs that read codons beginning with adenine. Catalyzes the conversion of L-threonine, HCO(3)(-)/CO(2) and ATP to give threonylcarbamoyl-AMP (TC-AMP) as the acyladenylate intermediate, with the release of diphosphate. This is Threonylcarbamoyl-AMP synthase from Shewanella oneidensis (strain ATCC 700550 / JCM 31522 / CIP 106686 / LMG 19005 / NCIMB 14063 / MR-1).